Consider the following 64-residue polypeptide: Large ribosomal subunit protein bL33c (64 aa).

It belongs to the bacterial ribosomal protein bL33 family.

Its subcellular location is the plastid. It is found in the chloroplast. The protein is Large ribosomal subunit protein bL33c (rpl33) of Trieres chinensis (Marine centric diatom).